The primary structure comprises 400 residues: Spermatogenic leucine zipper protein 1 (400 aa).

Positions 1–27 (MADSDSSSEMPAHSPSPSPIPCAKQKP) are disordered. Ser-106 carries the post-translational modification Phosphoserine. Positions 116–127 (RNKLRFKDDLFI) are helix-loop-helix motif. A basic motif region spans residues 128 to 193 (HFDPERENTM…HIRGEYRKLR (66 aa)). 2 coiled-coil regions span residues 182–231 (SVHI…KDIV) and 268–293 (LIAA…LHLH). Ser-207 carries the phosphoserine modification. A leucine-zipper region spans residues 252-273 (LEEQVKKLSQDTHSLHLIAALL). Positions 295 to 332 (AGPGHEKPLQTSGEQDKKCGEQDKKCGEQDKKCGEQDK) are disordered.

In terms of assembly, interacts with PPP1CC isoform gamma-2. In terms of processing, phosphorylated by MAPK1/ERK2 and MAPK3/ERK1.

Its subcellular location is the cytoplasm. The protein localises to the nucleus. Its function is as follows. Transcription factor that binds to the DNA sequence 5'-CANNTG-3'(E box) and the G-box motif. May play an important role in the regulation of cell proliferation and differentiation during spermatogenesis. This is Spermatogenic leucine zipper protein 1 (Spz1) from Rattus norvegicus (Rat).